The primary structure comprises 176 residues: DELTA-stichotoxin-She4a (176 aa).

The tract at residues 2 to 11 is plays an important role in the hemolytic activity; the sequence is ELAGTIIDGA. Residues 10–29 are N-terminal region; sequence GASLTFEVLDKVLGELGKVS. Residues Ser53, Val86, Ser104, Pro106, Tyr132, Tyr136, and Tyr137 each contribute to the phosphocholine site. Residues 104–119 are trp-rich region, which is important for the binding to lipid membrane; the sequence is SVPFDYNWYSNWWDVK. Residues 142 to 144 carry the Cell attachment site motif; it reads RGD.

Octamer or nonamer in membranes. Monomer in the soluble state.

The protein resides in the secreted. Its subcellular location is the nematocyst. It localises to the target cell membrane. Pore-forming protein that forms cations-selective hydrophilic pores of around 1 nm and causes cardiac stimulation and cytolysis. Pore formation is a multi-step process that involves specific recognition of membrane sphingomyelin (but neither cholesterol nor phosphatidylcholine) using aromatic rich region and adjacent phosphocholine (POC) binding site, firm binding to the membrane (mainly driven by hydrophobic interactions) accompanied by the transfer of the N-terminal region to the lipid-water interface and finally pore formation after oligomerization of monomers. Cytolytic effects include red blood cells hemolysis, platelet aggregation and lysis, cytotoxic and cytostatic effects on fibroblasts. Lethality in mammals has been ascribed to severe vasospasm of coronary vessels, cardiac arrhythmia, and inotropic effects. The polypeptide is DELTA-stichotoxin-She4a (Stichodactyla helianthus (Sun anemone)).